The following is a 656-amino-acid chain: Chaperone protein HtpG (656 aa).

The a; substrate-binding stretch occupies residues 1-364 (MSEQNPTDSK…SADLPLNVSR (364 aa)). The tract at residues 365 to 583 (EILQESRDVK…EGELSPQMIQ (219 aa)) is b. Residues 584–656 (MLKQMGQDVP…LRRVNELLMK (73 aa)) form a c region.

It belongs to the heat shock protein 90 family. In terms of assembly, homodimer.

Its subcellular location is the cytoplasm. Functionally, molecular chaperone. Has ATPase activity. The sequence is that of Chaperone protein HtpG from Psychrobacter arcticus (strain DSM 17307 / VKM B-2377 / 273-4).